A 311-amino-acid polypeptide reads, in one-letter code: Heme A synthase (311 aa).

Residues Met1–Lys6 are Cytoplasmic-facing. A helical membrane pass occupies residues Trp7 to Thr27. The Extracellular portion of the chain corresponds to Lys28–Arg62. Cysteines 35 and 42 form a disulfide. Glu58 is a catalytic residue. His61 is a binding site for heme o. A helical membrane pass occupies residues Leu63–Tyr83. The Cytoplasmic segment spans residues Lys84 to Thr91. Residues Leu92 to Val112 traverse the membrane as a helical segment. Residues Trp113 to Ala121 are Extracellular-facing. A helical transmembrane segment spans residues Ile122–Phe142. His123 is a heme o binding site. The Cytoplasmic portion of the chain corresponds to Glu143–Met159. The chain crosses the membrane as a helical span at residues Lys160–Val180. Residues Arg181–Met211 are Extracellular-facing. Cysteines 189 and 195 form a disulfide. The helical transmembrane segment at Gly212–Ile232 threads the bilayer. Heme b is bound at residue His213. The Cytoplasmic segment spans residues Arg233 to Trp243. A helical transmembrane segment spans residues Gly244–Phe264. The Extracellular segment spans residues Thr265–Met271. Residues Ala272–Leu292 traverse the membrane as a helical segment. Residue His275 participates in heme b binding. At Gly293–Lys311 the chain is on the cytoplasmic side.

This sequence belongs to the COX15/CtaA family. Type 1 subfamily. Interacts with CtaB. Heme b serves as cofactor.

Its subcellular location is the cell membrane. It catalyses the reaction Fe(II)-heme o + 2 A + H2O = Fe(II)-heme a + 2 AH2. The protein operates within porphyrin-containing compound metabolism; heme A biosynthesis; heme A from heme O: step 1/1. Catalyzes the conversion of heme O to heme A by two successive hydroxylations of the methyl group at C8. The first hydroxylation forms heme I, the second hydroxylation results in an unstable dihydroxymethyl group, which spontaneously dehydrates, resulting in the formyl group of heme A. This chain is Heme A synthase, found in Bacillus cereus (strain ATCC 10987 / NRS 248).